A 541-amino-acid chain; its full sequence is MPGLRRDRLLTLLLLGALLSADLYFHLWPQVQRQLRPRERPRGCPCTGRASSLARDSAAAASDPGTIVHNFSRTEPRTEPAGGSHSGSSSKLQALFAHPLYNVPEEPPLLGAEDSLLASQEALRYYRRKVARWNRRHKMYREQMNLTSLDPPLQLRLEASWVQFHLGINRHGLYSRSSPVVSKLLQDMRHFPTISADYSQDEKALLGACDCTQIVKPSGVHLKLVLRFSDFGKAMFKPMRQQRDEETPVDFFYFIDFQRHNAEIAAFHLDRILDFRRVPPTVGRIVNVTKEILEVTKNEILQSVFFVSPASNVCFFAKCPYMCKTEYAVCGNPHLLEGSLSAFLPSLNLAPRLSVPNPWIRSYTLAGKEEWEVNPLYCDTVKQIYPYNNSQRLLNVIDMAIFDFLIGNMDRHHYEMFTKFGDDGFLIHLDNARGFGRHSHDEISILSPLSQCCMIKKKTLLHLQLLAQADYRLSDVMRESLLEDQLSPVLTEPHLLALDRRLQTILRTVEGCIVAHGQQSVIVDGPVEQLAPDSGQANLTS.

Positions 1-33 are cleaved as a signal peptide; that stretch reads MPGLRRDRLLTLLLLGALLSADLYFHLWPQVQR. The segment at 38 to 90 is disordered; sequence RERPRGCPCTGRASSLARDSAAAASDPGTIVHNFSRTEPRTEPAGGSHSGSSS. Residues 49–63 show a composition bias toward low complexity; the sequence is RASSLARDSAAAASD. N-linked (GlcNAc...) asparagine glycans are attached at residues N70, N145, and N287. Disulfide bonds link C314–C330, C319–C323, C378–C452, and C453–C512. An N-linked (GlcNAc...) asparagine glycan is attached at N388. An N-linked (GlcNAc...) asparagine glycan is attached at N538.

Belongs to the FAM20 family. Interacts with FAM20C; probably forming a heterotetramer of 2 subunits of FAM20A and 2 subunits of FAM20C. N-glycosylated. In terms of tissue distribution, highly expressed in lung and liver. Intermediate levels in thymus and ovary.

Its subcellular location is the secreted. The protein localises to the golgi apparatus. The protein resides in the endoplasmic reticulum. Pseudokinase that acts as an allosteric activator of the Golgi serine/threonine protein kinase FAM20C and is involved in biomineralization of teeth. Forms a complex with FAM20C and increases the ability of FAM20C to phosphorylate the proteins that form the 'matrix' that guides the deposition of the enamel minerals. This Homo sapiens (Human) protein is Pseudokinase FAM20A.